A 39-amino-acid polypeptide reads, in one-letter code: MERNTNPNRQPVELNRTSLYLGLLLVAVLGILFSSYFFN.

A helical membrane pass occupies residues 18–38 (SLYLGLLLVAVLGILFSSYFF).

It belongs to the PsbL family. In terms of assembly, PSII is composed of 1 copy each of membrane proteins PsbA, PsbB, PsbC, PsbD, PsbE, PsbF, PsbH, PsbI, PsbJ, PsbK, PsbL, PsbM, PsbT, PsbX, PsbY, PsbZ, Psb30/Ycf12, peripheral proteins PsbO, CyanoQ (PsbQ), PsbU, PsbV and a large number of cofactors. It forms dimeric complexes.

Its subcellular location is the cellular thylakoid membrane. Functionally, one of the components of the core complex of photosystem II (PSII). PSII is a light-driven water:plastoquinone oxidoreductase that uses light energy to abstract electrons from H(2)O, generating O(2) and a proton gradient subsequently used for ATP formation. It consists of a core antenna complex that captures photons, and an electron transfer chain that converts photonic excitation into a charge separation. This subunit is found at the monomer-monomer interface and is required for correct PSII assembly and/or dimerization. This Rippkaea orientalis (strain PCC 8801 / RF-1) (Cyanothece sp. (strain PCC 8801)) protein is Photosystem II reaction center protein L.